A 147-amino-acid chain; its full sequence is Flagellar assembly factor FliW (147 aa).

It belongs to the FliW family. In terms of assembly, interacts with translational regulator CsrA and flagellin(s).

The protein resides in the cytoplasm. Its function is as follows. Acts as an anti-CsrA protein, binds CsrA and prevents it from repressing translation of its target genes, one of which is flagellin. Binds to flagellin and participates in the assembly of the flagellum. The polypeptide is Flagellar assembly factor FliW (Treponema denticola (strain ATCC 35405 / DSM 14222 / CIP 103919 / JCM 8153 / KCTC 15104)).